The chain runs to 124 residues: Small ribosomal subunit protein uS13 (124 aa).

Positions 91–124 (HRKGLPVNGQNTRNNARTRKGKPKAVTGKKQAGK) are disordered.

It belongs to the universal ribosomal protein uS13 family. As to quaternary structure, part of the 30S ribosomal subunit. Forms a loose heterodimer with protein S19. Forms two bridges to the 50S subunit in the 70S ribosome.

Its function is as follows. Located at the top of the head of the 30S subunit, it contacts several helices of the 16S rRNA. In the 70S ribosome it contacts the 23S rRNA (bridge B1a) and protein L5 of the 50S subunit (bridge B1b), connecting the 2 subunits; these bridges are implicated in subunit movement. Contacts the tRNAs in the A and P-sites. In Acholeplasma laidlawii (strain PG-8A), this protein is Small ribosomal subunit protein uS13.